Reading from the N-terminus, the 138-residue chain is Cysteine desulfuration protein SufE (138 aa).

The active-site Cysteine persulfide intermediate is Cys-51.

The protein belongs to the SufE family. Homodimer. Interacts with SufS.

The protein localises to the cytoplasm. It functions in the pathway cofactor biosynthesis; iron-sulfur cluster biosynthesis. Functionally, participates in cysteine desulfuration mediated by SufS. Cysteine desulfuration mobilizes sulfur from L-cysteine to yield L-alanine and constitutes an essential step in sulfur metabolism for biosynthesis of a variety of sulfur-containing biomolecules. Functions as a sulfur acceptor for SufS, by mediating the direct transfer of the sulfur atom from the S-sulfanylcysteine of SufS, an intermediate product of cysteine desulfuration process. This is Cysteine desulfuration protein SufE from Escherichia coli O45:K1 (strain S88 / ExPEC).